We begin with the raw amino-acid sequence, 233 residues long: UPF0502 protein YPTS_2082 (233 aa).

Belongs to the UPF0502 family.

The sequence is that of UPF0502 protein YPTS_2082 from Yersinia pseudotuberculosis serotype IB (strain PB1/+).